Here is a 173-residue protein sequence, read N- to C-terminus: Large ribosomal subunit protein uL10 (173 aa).

Belongs to the universal ribosomal protein uL10 family. Part of the ribosomal stalk of the 50S ribosomal subunit. The N-terminus interacts with L11 and the large rRNA to form the base of the stalk. The C-terminus forms an elongated spine to which L12 dimers bind in a sequential fashion forming a multimeric L10(L12)X complex.

Its function is as follows. Forms part of the ribosomal stalk, playing a central role in the interaction of the ribosome with GTP-bound translation factors. The sequence is that of Large ribosomal subunit protein uL10 from Bifidobacterium adolescentis (strain ATCC 15703 / DSM 20083 / NCTC 11814 / E194a).